A 796-amino-acid chain; its full sequence is Serine/threonine-protein kinase ATG1 (796 aa).

One can recognise a Protein kinase domain in the interval 9–304; sequence YVVGAEIGRG…FQEFFNDPVI (296 aa). ATP contacts are provided by residues 15-23 and K38; that span reads IGRGSFANV. The Proton acceptor role is filled by D155. The segment covering 360 to 370 has biased composition (acidic residues); that stretch reads LEEEDEEEDQD. Disordered stretches follow at residues 360-382, 389-408, and 450-480; these read LEEE…IQHM, LLNK…RREL, and PYTR…KVPI. A compositionally biased stretch (polar residues) spans 389-403; the sequence is LLNKTTQKQTEVQSQ. The span at 453-470 shows a compositional bias: low complexity; the sequence is RRYSSSSRSSSTGSNQRR.

The protein belongs to the protein kinase superfamily. Ser/Thr protein kinase family. APG1/unc-51/ULK1 subfamily. In terms of assembly, homodimer. Forms a ternary complex with ATG13 and ATG17.

Its subcellular location is the cytoplasm. It is found in the preautophagosomal structure membrane. The enzyme catalyses L-seryl-[protein] + ATP = O-phospho-L-seryl-[protein] + ADP + H(+). The catalysed reaction is L-threonyl-[protein] + ATP = O-phospho-L-threonyl-[protein] + ADP + H(+). Its function is as follows. Serine/threonine protein kinase involved in the cytoplasm to vacuole transport (Cvt) and found to be essential in autophagy, where it is required for the formation of autophagosomes. Involved in the clearance of protein aggregates which cannot be efficiently cleared by the proteasome. Required for selective autophagic degradation of the nucleus (nucleophagy) as well as for mitophagy which contributes to regulate mitochondrial quantity and quality by eliminating the mitochondria to a basal level to fulfill cellular energy requirements and preventing excess ROS production. Also involved in endoplasmic reticulum-specific autophagic process, in selective removal of ER-associated degradation (ERAD) substrates. Plays a key role in ATG9 and ATG23 cycling through the pre-autophagosomal structure and is necessary to promote ATG18 binding to ATG9 through phosphorylation of ATG9. Catalyzes phosphorylation of ATG4, decreasing the interaction between ATG4 and ATG8 and impairing deconjugation of PE-conjugated forms of ATG8. In Komagataella pastoris (Yeast), this protein is Serine/threonine-protein kinase ATG1.